The chain runs to 198 residues: Ribonuclease HII (198 aa).

The region spanning His10–Ser198 is the RNase H type-2 domain. The a divalent metal cation site is built by Asp16, Glu17, and Asp108.

This sequence belongs to the RNase HII family. Requires Mn(2+) as cofactor. Mg(2+) is required as a cofactor.

Its subcellular location is the cytoplasm. The catalysed reaction is Endonucleolytic cleavage to 5'-phosphomonoester.. Functionally, endonuclease that specifically degrades the RNA of RNA-DNA hybrids. This chain is Ribonuclease HII, found in Escherichia coli (strain ATCC 8739 / DSM 1576 / NBRC 3972 / NCIMB 8545 / WDCM 00012 / Crooks).